The sequence spans 627 residues: Translation factor GUF1, mitochondrial (627 aa).

A mitochondrion-targeting transit peptide spans Met1 to Tyr16. The 182-residue stretch at Glu40–Val221 folds into the tr-type G domain. GTP is bound by residues Ala49–Ser56, Asp114–His118, and Asn168–Asp171.

This sequence belongs to the TRAFAC class translation factor GTPase superfamily. Classic translation factor GTPase family. LepA subfamily.

It localises to the mitochondrion inner membrane. The catalysed reaction is GTP + H2O = GDP + phosphate + H(+). Promotes mitochondrial protein synthesis. May act as a fidelity factor of the translation reaction, by catalyzing a one-codon backward translocation of tRNAs on improperly translocated ribosomes. Binds to mitochondrial ribosomes in a GTP-dependent manner. The polypeptide is Translation factor GUF1, mitochondrial (Fusarium vanettenii (strain ATCC MYA-4622 / CBS 123669 / FGSC 9596 / NRRL 45880 / 77-13-4) (Fusarium solani subsp. pisi)).